Here is a 1339-residue protein sequence, read N- to C-terminus: DNA polymerase alpha catalytic subunit (1339 aa).

Disordered stretches follow at residues 1–90 (MSGG…SMSD) and 177–203 (NVER…GYRN). Residues 27–36 (DQWRSLREEV) show a composition bias toward basic and acidic residues. The segment covering 79-89 (PKQQTLAQSMS) has biased composition (polar residues). Cys-1179, Cys-1182, Cys-1213, Cys-1216, Cys-1233, Cys-1243, Cys-1271, and Cys-1286 together coordinate Zn(2+). The CysA-type zinc-finger motif lies at 1179-1216 (CTHCRLMTPINPHTRVMEVLADQERQRDRFDLYVCVSC). Positions 1243 to 1271 (CGSAAAVKAVRTQFTYYRALFDVPHAPGC) match the CysB motif motif.

This sequence belongs to the DNA polymerase type-B family.

The protein localises to the nucleus. The catalysed reaction is DNA(n) + a 2'-deoxyribonucleoside 5'-triphosphate = DNA(n+1) + diphosphate. Its function is as follows. Polymerase alpha in a complex with DNA primase is a replicative polymerase. This chain is DNA polymerase alpha catalytic subunit, found in Leishmania donovani.